The following is a 366-amino-acid chain: S-adenosylmethionine:tRNA ribosyltransferase-isomerase (366 aa).

Belongs to the QueA family. As to quaternary structure, monomer.

It localises to the cytoplasm. It carries out the reaction 7-aminomethyl-7-carbaguanosine(34) in tRNA + S-adenosyl-L-methionine = epoxyqueuosine(34) in tRNA + adenine + L-methionine + 2 H(+). Its pathway is tRNA modification; tRNA-queuosine biosynthesis. In terms of biological role, transfers and isomerizes the ribose moiety from AdoMet to the 7-aminomethyl group of 7-deazaguanine (preQ1-tRNA) to give epoxyqueuosine (oQ-tRNA). In Bradyrhizobium diazoefficiens (strain JCM 10833 / BCRC 13528 / IAM 13628 / NBRC 14792 / USDA 110), this protein is S-adenosylmethionine:tRNA ribosyltransferase-isomerase.